Here is a 349-residue protein sequence, read N- to C-terminus: S-adenosylmethionine decarboxylase proenzyme 3 (349 aa).

Residues Glu-9 and Glu-12 contribute to the active site. Residue Glu-68 coordinates substrate. The active-site Schiff-base intermediate with substrate; via pyruvic acid is Ser-69. Ser-69 carries the post-translational modification Pyruvic acid (Ser); by autocatalysis. Cys-83 (proton donor; for catalytic activity) is an active-site residue. Residues Ser-235 and His-248 each act as proton acceptor; for processing activity in the active site. Glu-252 serves as a coordination point for substrate.

This sequence belongs to the eukaryotic AdoMetDC family. The cofactor is pyruvate. Is synthesized initially as an inactive proenzyme. Formation of the active enzyme involves a self-maturation process in which the active site pyruvoyl group is generated from an internal serine residue via an autocatalytic post-translational modification. Two non-identical subunits are generated from the proenzyme in this reaction, and the pyruvate is formed at the N-terminus of the alpha chain, which is derived from the carboxyl end of the proenzyme. The post-translation cleavage follows an unusual pathway, termed non-hydrolytic serinolysis, in which the side chain hydroxyl group of the serine supplies its oxygen atom to form the C-terminus of the beta chain, while the remainder of the serine residue undergoes an oxidative deamination to produce ammonia and the pyruvoyl group blocking the N-terminus of the alpha chain.

It catalyses the reaction S-adenosyl-L-methionine + H(+) = S-adenosyl 3-(methylsulfanyl)propylamine + CO2. The protein operates within amine and polyamine biosynthesis; S-adenosylmethioninamine biosynthesis; S-adenosylmethioninamine from S-adenosyl-L-methionine: step 1/1. Essential for biosynthesis of the polyamines spermidine and spermine. Essential for polyamine homeostasis, and normal plant embryogenesis, growth and development. The polypeptide is S-adenosylmethionine decarboxylase proenzyme 3 (Arabidopsis thaliana (Mouse-ear cress)).